Here is a 623-residue protein sequence, read N- to C-terminus: Glutamine--fructose-6-phosphate aminotransferase [isomerizing] (623 aa).

Cys2 functions as the Nucleophile; for GATase activity in the catalytic mechanism. Positions 2-228 (CGIVGYIGQA…NDQVVTITAD (227 aa)) constitute a Glutamine amidotransferase type-2 domain. 2 consecutive SIS domains span residues 295 to 435 (IDEA…LRGN) and 468 to 613 (LGQD…VDQP). Lys618 acts as the For Fru-6P isomerization activity in catalysis.

In terms of assembly, homodimer.

It is found in the cytoplasm. It catalyses the reaction D-fructose 6-phosphate + L-glutamine = D-glucosamine 6-phosphate + L-glutamate. In terms of biological role, catalyzes the first step in hexosamine metabolism, converting fructose-6P into glucosamine-6P using glutamine as a nitrogen source. In Corynebacterium glutamicum (strain ATCC 13032 / DSM 20300 / JCM 1318 / BCRC 11384 / CCUG 27702 / LMG 3730 / NBRC 12168 / NCIMB 10025 / NRRL B-2784 / 534), this protein is Glutamine--fructose-6-phosphate aminotransferase [isomerizing].